The sequence spans 393 residues: Putative competence-damage inducible protein (393 aa).

It belongs to the CinA family.

The chain is Putative competence-damage inducible protein from Streptococcus suis (strain 05ZYH33).